The sequence spans 105 residues: Class II hydrophobin 1 (105 aa).

Positions 1–15 (MQVLLIATLVASVLA) are cleaved as a signal peptide. Intrachain disulfides connect cysteine 38/cysteine 87, cysteine 48/cysteine 78, cysteine 49/cysteine 58, and cysteine 88/cysteine 99.

Belongs to the cerato-ulmin hydrophobin family. Homotetramer. Further self-assembles to form highly ordered films at water-air interfaces through intermolecular interactions.

It localises to the secreted. Its subcellular location is the cell wall. Functionally, aerial growth, conidiation, and dispersal of filamentous fungi in the environment rely upon a capability of their secreting small amphipathic proteins called hydrophobins (HPBs) with low sequence identity. Class I can self-assemble into an outermost layer of rodlet bundles on aerial cell surfaces, conferring cellular hydrophobicity that supports fungal growth, development and dispersal; whereas Class II form highly ordered films at water-air interfaces through intermolecular interactions but contribute nothing to the rodlet structure. HYD1 is a class II hydrophobin that plays roles in conidiation and cuticle-bypassing infection by regulating the transcripts of frequency clock protein frq, and velvet protein vosA, as well as primordium formation via the mitogen-activated protein kinase signaling pathway. Also participates in stress response, including tolerance of mycelia to osmotic and oxidative stresses, and conidia to high or low temperature. Acts as a defensive factor against Calcarisporium cordycipiticola infection, probably via the formation of a physical barrier to inhibit the pathogen infection owing to its hydrophobicity or binding to the effector of C.cordycipiticola, hindering the recognition of the pathogen. Finally, regulates the transcription of the AreA transcription factor at different developmental stages via a positive feedback loop. The protein is Class II hydrophobin 1 of Cordyceps militaris (Caterpillar fungus).